We begin with the raw amino-acid sequence, 196 residues long: Peptide deformylase (196 aa).

Fe cation is bound by residues cysteine 105 and histidine 147. Glutamate 148 is a catalytic residue. Histidine 151 lines the Fe cation pocket.

It belongs to the polypeptide deformylase family. The cofactor is Fe(2+).

It catalyses the reaction N-terminal N-formyl-L-methionyl-[peptide] + H2O = N-terminal L-methionyl-[peptide] + formate. Functionally, removes the formyl group from the N-terminal Met of newly synthesized proteins. Requires at least a dipeptide for an efficient rate of reaction. N-terminal L-methionine is a prerequisite for activity but the enzyme has broad specificity at other positions. The polypeptide is Peptide deformylase (Flavobacterium johnsoniae (strain ATCC 17061 / DSM 2064 / JCM 8514 / BCRC 14874 / CCUG 350202 / NBRC 14942 / NCIMB 11054 / UW101) (Cytophaga johnsonae)).